Here is a 394-residue protein sequence, read N- to C-terminus: MATVDRWLLPDGIEEVLPPEAARIEAARRQVLDLFHRWGYEFVVTPHIEYLESLLTGAGQDLDLRTFKVTDPASGRLMGFRADITPQVARMDAHSLRREGPSRLCYAGSVLHAQPRALSTSRSPIQLGAELYGDASPASDVEVISLMLDMLEMAEVPDVHMDLGHVGIYRGLARAAGLSGEVEQQLFDALQRKAVDEVEALTASLPGELRDMLRALAELCGGRDALEQGRVRLAAAPTEVQVALNELIEIADSLAARFPGLPLYFDLGELRGYHYHTGVVFAAFVPGVGQSIAQGGRYDDIGADFGRARPATGFSTDLKNLVTLGQARLDQAVSGIWAPAEGAGLWQAVQRLRRDGQRVVQALPGQDAASAREAGCDRQLALRDGNWQVAPLAS.

It belongs to the class-II aminoacyl-tRNA synthetase family. HisZ subfamily. Heteromultimer composed of HisG and HisZ subunits.

Its subcellular location is the cytoplasm. The protein operates within amino-acid biosynthesis; L-histidine biosynthesis; L-histidine from 5-phospho-alpha-D-ribose 1-diphosphate: step 1/9. In terms of biological role, required for the first step of histidine biosynthesis. May allow the feedback regulation of ATP phosphoribosyltransferase activity by histidine. The sequence is that of ATP phosphoribosyltransferase regulatory subunit from Pseudomonas paraeruginosa (strain DSM 24068 / PA7) (Pseudomonas aeruginosa (strain PA7)).